The following is a 134-amino-acid chain: Ribonuclease P protein component (134 aa).

Belongs to the RnpA family. As to quaternary structure, consists of a catalytic RNA component (M1 or rnpB) and a protein subunit.

It carries out the reaction Endonucleolytic cleavage of RNA, removing 5'-extranucleotides from tRNA precursor.. In terms of biological role, RNaseP catalyzes the removal of the 5'-leader sequence from pre-tRNA to produce the mature 5'-terminus. It can also cleave other RNA substrates such as 4.5S RNA. The protein component plays an auxiliary but essential role in vivo by binding to the 5'-leader sequence and broadening the substrate specificity of the ribozyme. This Pseudomonas putida (strain ATCC 700007 / DSM 6899 / JCM 31910 / BCRC 17059 / LMG 24140 / F1) protein is Ribonuclease P protein component.